A 608-amino-acid chain; its full sequence is Afamin (608 aa).

The first 21 residues, 1–21, serve as a signal peptide directing secretion; it reads MRHLKLTGFIFFLLPLTESLA. Albumin domains lie at 22 to 210, 211 to 403, and 404 to 599; these read LPTK…APIT, QYLK…KFNE, and TTQR…KTGD. N33 carries an N-linked (GlcNAc...) asparagine glycan. Disulfide bonds link C77–C86, C99–C114, C113–C124, C148–C193, C192–C201, C224–C270, C269–C277, C289–C303, C302–C313, C340–C385, and C384–C393. N109 carries N-linked (GlcNAc...) asparagine glycosylation. N153 is a glycosylation site (N-linked (GlcNAc...) asparagine). The binding pocket for hydrophobic ligands stretch occupies residues 215–319; sequence ASSSYQRNVC…REACIINANK (105 aa). N402 carries an N-linked (GlcNAc...) asparagine glycan. Disulfide bonds link C416-C462, C461-C470, C483-C499, C498-C509, and C580-C589. An N-linked (GlcNAc...) asparagine glycan is attached at N488. The disordered stretch occupies residues 583 to 608; the sequence is VQEPESCFSPESSKTGDESQATEKQR. The span at 596 to 608 shows a compositional bias: basic and acidic residues; the sequence is KTGDESQATEKQR.

It belongs to the ALB/AFP/VDB family. As to quaternary structure, forms a 1:1 complex with Wnt family members; interacts with WNT1, WNT2B, WNT3, WNT5A, WNT7A, WNT7B, WNT8, WNT9A, WNT9B, WNT10A and WNT10B. Interacts with WNT3A. In terms of processing, N-glycosylated; more than 90% of the glycans are sialylated. Detected in brain, especially on brain capillaries (at protein level). Expressed in isolated brain capillaries.

The protein resides in the secreted. Its function is as follows. Functions as a carrier for hydrophobic molecules in body fluids. Essential for the solubility and activity of lipidated Wnt family members, including WNT1, WNT2B, WNT3, WNT3A, WNT5A, WNT7A, WNT7B, WNT8, WNT9A, WNT9B, WNT10A and WNT10B. Binds vitamin E. May transport vitamin E in body fluids under conditions where the lipoprotein system is not sufficient. May be involved in the transport of vitamin E across the blood-brain barrier. In Mus musculus (Mouse), this protein is Afamin (Afm).